Reading from the N-terminus, the 527-residue chain is Exodeoxyribonuclease 7 large subunit (527 aa).

Residues 499–527 (AGEEGAPPPAAPKKRASRPVVPTKQGSLF) form a disordered region.

Belongs to the XseA family. Heterooligomer composed of large and small subunits.

Its subcellular location is the cytoplasm. The enzyme catalyses Exonucleolytic cleavage in either 5'- to 3'- or 3'- to 5'-direction to yield nucleoside 5'-phosphates.. Its function is as follows. Bidirectionally degrades single-stranded DNA into large acid-insoluble oligonucleotides, which are then degraded further into small acid-soluble oligonucleotides. In Sinorhizobium fredii (strain NBRC 101917 / NGR234), this protein is Exodeoxyribonuclease 7 large subunit.